The chain runs to 282 residues: Casein kinase II subunit beta-2 (282 aa).

The tract at residues Met1–Glu92 is disordered. Residues Glu13–Pro28 show a composition bias toward basic and acidic residues. 2 stretches are compositionally biased toward polar residues: residues Ser29–Val47 and Arg61–Ser71. Positions Asp75 to Glu92 are enriched in acidic residues.

The protein belongs to the casein kinase 2 subunit beta family. In terms of assembly, heterotetramer of two catalytic alpha subunits and two regulatory beta subunits. Interacts with CCA1. In terms of processing, phosphorylated by alpha subunit.

It localises to the cytoplasm. The protein localises to the cytosol. It is found in the nucleus. Plays a complex role in regulating the basal catalytic activity of the alpha subunit. The tetrameric holoenzyme CK2, composed of two alpha and two beta subunits, phosphorylates the transcription factor PIF1 after an exposure to light, resulting in a proteasome-dependent degradation of PIF1 and promotion of photomorphogenesis. CK2 phosphorylates translation initiation factors. May participate in the regulation of the initiation of translation. In Arabidopsis thaliana (Mouse-ear cress), this protein is Casein kinase II subunit beta-2 (CKB2).